An 87-amino-acid chain; its full sequence is Small ribosomal subunit protein bS20 (87 aa).

The protein belongs to the bacterial ribosomal protein bS20 family.

In terms of biological role, binds directly to 16S ribosomal RNA. This Lachnoclostridium phytofermentans (strain ATCC 700394 / DSM 18823 / ISDg) (Clostridium phytofermentans) protein is Small ribosomal subunit protein bS20.